Reading from the N-terminus, the 118-residue chain is SPbeta prophage-derived uncharacterized protein YomS (118 aa).

In Bacillus subtilis (strain 168), this protein is SPbeta prophage-derived uncharacterized protein YomS (yomS).